Here is a 61-residue protein sequence, read N- to C-terminus: Short neurotoxin 1 (61 aa).

Intrachain disulfides connect cysteine 3–cysteine 23, cysteine 17–cysteine 40, cysteine 42–cysteine 53, and cysteine 54–cysteine 59.

It belongs to the three-finger toxin family. Short-chain subfamily. Type I alpha-neurotoxin sub-subfamily. As to expression, expressed by the venom gland.

Its subcellular location is the secreted. In terms of biological role, binds to muscle nicotinic acetylcholine receptor (nAChR) and inhibit acetylcholine from binding to the receptor, thereby impairing neuromuscular transmission. The chain is Short neurotoxin 1 from Naja samarensis (Peters' cobra).